Reading from the N-terminus, the 453-residue chain is Acyl-coenzyme A thioesterase 2, mitochondrial (453 aa).

A mitochondrion-targeting transit peptide spans 1–42 (MVASSFAVLRASRLCQWGWKSWTQLSGPPPLSTGGRTTFART). The residue at position 83 (Lys-83) is an N6-acetyllysine. Active-site charge relay system residues include Ser-273, Asp-365, and His-399. Lys-447 bears the N6-succinyllysine mark.

The protein belongs to the C/M/P thioester hydrolase family. As to quaternary structure, monomer. Post-translationally, the N-terminus is blocked. As to expression, constitutively expressed in heart and brown fat. Strongly induced in liver, and weakly in kidney, in peroxisome proliferator treated rat.

The protein localises to the mitochondrion matrix. The catalysed reaction is hexadecanoyl-CoA + H2O = hexadecanoate + CoA + H(+). It carries out the reaction tetradecanoyl-CoA + H2O = tetradecanoate + CoA + H(+). It catalyses the reaction octadecanoyl-CoA + H2O = octadecanoate + CoA + H(+). The enzyme catalyses eicosanoyl-CoA + H2O = eicosanoate + CoA + H(+). The catalysed reaction is decanoyl-CoA + H2O = decanoate + CoA + H(+). It carries out the reaction dodecanoyl-CoA + H2O = dodecanoate + CoA + H(+). It catalyses the reaction (9Z)-octadecenoyl-CoA + H2O = (9Z)-octadecenoate + CoA + H(+). The enzyme catalyses (9Z)-hexadecenoyl-CoA + H2O = (9Z)-hexadecenoate + CoA + H(+). The catalysed reaction is (9E)-octadecenoyl-CoA + H2O = (9E)-octadecenoate + CoA + H(+). It carries out the reaction (9Z,12Z)-octadecadienoyl-CoA + H2O = (9Z,12Z)-octadecadienoate + CoA + H(+). It participates in lipid metabolism; fatty acid metabolism. Catalyzes the hydrolysis of acyl-CoAs into free fatty acids and coenzyme A (CoASH), regulating their respective intracellular levels. Displays higher activity toward long chain acyl CoAs (C14-C20). The enzyme is involved in enhancing the hepatic fatty acid oxidation in mitochondria. The chain is Acyl-coenzyme A thioesterase 2, mitochondrial (Acot2) from Rattus norvegicus (Rat).